The following is a 159-amino-acid chain: Large ribosomal subunit protein uL22c (159 aa).

The protein belongs to the universal ribosomal protein uL22 family. Part of the 50S ribosomal subunit.

The protein localises to the plastid. It is found in the chloroplast. Functionally, this protein binds specifically to 23S rRNA. The globular domain of the protein is located near the polypeptide exit tunnel on the outside of the subunit, while an extended beta-hairpin is found that lines the wall of the exit tunnel in the center of the 70S ribosome. The sequence is that of Large ribosomal subunit protein uL22c (rpl22) from Ipomoea purpurea (Common morning glory).